The chain runs to 1047 residues: Cation efflux system protein CusA (1047 aa).

Helical transmembrane passes span 14 to 34 (FLVL…IINT), 338 to 358 (LSGK…LFLW), 363 to 383 (ALVA…VMHF), 391 to 411 (MSLG…IVMI), 446 to 466 (VGPA…PIFT), 485 to 505 (AMAG…GYWI), 532 to 552 (VLHW…TVLW), 871 to 891 (KLKL…YLAF), 898 to 918 (LLII…LWWM), 928 to 948 (TGFI…LMYL), 985 to 1005 (AMTV…TGAG), and 1012 to 1032 (IAAP…FIIP).

Belongs to the resistance-nodulation-cell division (RND) (TC 2.A.6) family. The cus efflux system is composed of CusA, CusB, CusC and CusF.

The protein resides in the cell inner membrane. Functionally, part of a cation efflux system that mediates resistance to copper and silver. This is Cation efflux system protein CusA (cusA) from Escherichia coli (strain K12).